A 361-amino-acid polypeptide reads, in one-letter code: Solute carrier family 25 member 3 (361 aa).

A mitochondrion-targeting transit peptide spans 1 to 49 (MFSSVAHLARANPFNTPHLQLVHDGLGDFRSRPPGPTGQPRRPRNLAAA). Residues 25–44 (GLGDFRSRPPGPTGQPRRPR) are disordered. The Mitochondrial intermembrane portion of the chain corresponds to 50 to 62 (AVEEYSCEFGSAK). 3 Solcar repeats span residues 62 to 146 (KYYA…FKVL), 159 to 243 (WRTS…TVEA), and 260 to 338 (EQLV…VKVY). Residues 63–85 (YYALCGFGGVLSCGLTHTAVVPL) form a helical membrane-spanning segment. Residues 86–120 (DLVKCRMQVDPQKYKGIFNGFSVTLKEDGVRGLAK) are Mitochondrial matrix-facing. Residue Lys98 is modified to N6-acetyllysine. Lys111 carries the N6-methyllysine modification. Residues 121 to 140 (GWAPTFLGYSMQGLCKFGFY) traverse the membrane as a helical segment. The Mitochondrial intermembrane segment spans residues 141 to 160 (EVFKVLYSNMLGEENTYLWR). A helical transmembrane segment spans residues 161–182 (TSLYLAASASAEFFADIALAPM). Residues 183 to 217 (EAAKVRIQTQPGYANTLRDAAPKMYKEEGLKAFYK) are Mitochondrial matrix-facing. Position 195 is a phosphotyrosine (Tyr195). Lys208 bears the N6-acetyllysine mark. A helical transmembrane segment spans residues 218-237 (GVAPLWMRQIPYTMMKFACF). Residues 238 to 260 (ERTVEALYKFVVPKPRSECSKPE) lie on the Mitochondrial intermembrane side of the membrane. Residues 261 to 283 (QLVVTFVAGYIAGVFCAIVSHPA) traverse the membrane as a helical segment. The Mitochondrial matrix portion of the chain corresponds to 284-313 (DSVVSVLNKEKGSSASLVLKRLGFKGVWKG). A helical membrane pass occupies residues 314–332 (LFARIIMIGTLTALQWFIY). At 333-361 (DSVKVYFRLPRPPPPEMPESLKKKLGLTQ) the chain is on the mitochondrial intermembrane side.

It belongs to the mitochondrial carrier (TC 2.A.29) family. Interacts with PPIF; the interaction is impaired by CsA.

The protein localises to the mitochondrion inner membrane. It catalyses the reaction phosphate(in) + H(+)(in) = phosphate(out) + H(+)(out). Inorganic ion transporter that transports phosphate or copper ions across the mitochondrial inner membrane into the matrix compartment. Mediates proton-coupled symport of phosphate ions necessary for mitochondrial oxidative phosphorylation of ADP to ATP. Transports copper ions probably in the form of anionic copper(I) complexes to maintain mitochondrial matrix copper pool and to supply copper for cytochrome C oxidase complex assembly. May also play a role in regulation of the mitochondrial permeability transition pore (mPTP). The sequence is that of Solute carrier family 25 member 3 from Pongo abelii (Sumatran orangutan).